We begin with the raw amino-acid sequence, 476 residues long: Stromelysin-2 (476 aa).

The signal sequence occupies residues 1–17 (MEPLAILALLSLPICSA). Residues 18-99 (YPLHGAVTQG…PRCGVPDVGG (82 aa)) constitute a propeptide, activation peptide. The Cysteine switch motif lies at 90 to 97 (PRCGVPDV). Residues C92, H168, D170, H183, H196, and H218 each contribute to the Zn(2+) site. E219 is a catalytic residue. Zn(2+)-binding residues include H222 and H228. Hemopexin repeat units lie at residues 286 to 335 (PDKC…WPTL), 336 to 382 (PSDL…GFPP), 384 to 432 (VKKI…FPGI), and 433 to 476 (EPQV…WLLC). A disulfide bond links C289 and C476.

This sequence belongs to the peptidase M10A family. Zn(2+) serves as cofactor. Requires Ca(2+) as cofactor. As to expression, expressed in small intestine. Weak levels in heart and lung.

The protein localises to the secreted. The protein resides in the extracellular space. Its subcellular location is the extracellular matrix. The enzyme catalyses Similar to stromelysin 1, but action on collagen types III, IV and V is weak.. Its function is as follows. Can degrade fibronectin, gelatins of type I, III, IV, and V; weakly collagens III, IV, and V. Activates procollagenase. The sequence is that of Stromelysin-2 (Mmp10) from Mus musculus (Mouse).